The chain runs to 212 residues: Methylthioribulose-1-phosphate dehydratase (212 aa).

Residues His-97 and His-99 each coordinate Zn(2+).

It belongs to the aldolase class II family. MtnB subfamily. In terms of assembly, homotetramer. Zn(2+) serves as cofactor.

It catalyses the reaction 5-(methylsulfanyl)-D-ribulose 1-phosphate = 5-methylsulfanyl-2,3-dioxopentyl phosphate + H2O. The protein operates within amino-acid biosynthesis; L-methionine biosynthesis via salvage pathway; L-methionine from S-methyl-5-thio-alpha-D-ribose 1-phosphate: step 2/6. Functionally, catalyzes the dehydration of methylthioribulose-1-phosphate (MTRu-1-P) into 2,3-diketo-5-methylthiopentyl-1-phosphate (DK-MTP-1-P). This is Methylthioribulose-1-phosphate dehydratase from Bacillus cereus (strain ATCC 10987 / NRS 248).